Reading from the N-terminus, the 254-residue chain is L-rhamnose 1-dehydrogenase (NADP(+)) (254 aa).

Residues Gly13, Ser15, Arg16, Ile18, Asp64, and Asn91 each coordinate NADP(+). Catalysis depends on Ser144, which acts as the Proton donor. The beta-L-rhamnose site is built by Ser144, Ser146, Gln154, and Tyr157. Tyr157 and Lys161 together coordinate NADP(+). Tyr157 (proton acceptor) is an active-site residue. The active-site Lowers pKa of active site Tyr is Lys161. Thr189 contributes to the beta-L-rhamnose binding site. Ile190 contributes to the NADP(+) binding site. Beta-L-rhamnose is bound at residue Asn195.

Belongs to the short-chain dehydrogenases/reductases (SDR) family.

It catalyses the reaction L-rhamnofuranose + NADP(+) = L-rhamnono-1,4-lactone + NADPH + H(+). It functions in the pathway carbohydrate degradation; L-rhamnose degradation. Involved in the non-phosphorylated metabolic pathway of L-rhamnose catabolism. Catalyzes the oxidation of L-rhamnose to yield L-rhamnono-1,4-lactone. It can also oxidize L-lyxose and L-mannose, and uses only NADP. The chain is L-rhamnose 1-dehydrogenase (NADP(+)) from Thermoplasma acidophilum (strain ATCC 25905 / DSM 1728 / JCM 9062 / NBRC 15155 / AMRC-C165).